A 201-amino-acid chain; its full sequence is Small ribosomal subunit protein uS4c (201 aa).

The tract at residues 20 to 44 is disordered; the sequence is GLTSKRPRAGSDLRNQSRSGKKSQY. Residues 89–152 form the S4 RNA-binding domain; the sequence is MRLDNTLFRL…NSRTLVQNLL (64 aa).

The protein belongs to the universal ribosomal protein uS4 family. As to quaternary structure, part of the 30S ribosomal subunit. Contacts protein S5. The interaction surface between S4 and S5 is involved in control of translational fidelity.

The protein resides in the plastid. The protein localises to the chloroplast. One of the primary rRNA binding proteins, it binds directly to 16S rRNA where it nucleates assembly of the body of the 30S subunit. Its function is as follows. With S5 and S12 plays an important role in translational accuracy. This is Small ribosomal subunit protein uS4c (rps4) from Aethionema grandiflorum (Persian stone-cress).